We begin with the raw amino-acid sequence, 224 residues long: Large ribosomal subunit protein uL4 (224 aa).

A disordered region spans residues 52–109 (AAARQGTHSTKTRGDVSGGGRKPYRQKGTGRARQGSTRAPQFTGGGVVHGPKPRDYSQ).

It belongs to the universal ribosomal protein uL4 family. In terms of assembly, part of the 50S ribosomal subunit.

Its function is as follows. One of the primary rRNA binding proteins, this protein initially binds near the 5'-end of the 23S rRNA. It is important during the early stages of 50S assembly. It makes multiple contacts with different domains of the 23S rRNA in the assembled 50S subunit and ribosome. In terms of biological role, forms part of the polypeptide exit tunnel. In Mycobacterium marinum (strain ATCC BAA-535 / M), this protein is Large ribosomal subunit protein uL4.